We begin with the raw amino-acid sequence, 243 residues long: Carboxy-S-adenosyl-L-methionine synthase (243 aa).

S-adenosyl-L-methionine contacts are provided by residues tyrosine 39, 64–66 (GCS), 89–90 (DN), 117–118 (DL), asparagine 132, and arginine 199.

It belongs to the class I-like SAM-binding methyltransferase superfamily. Cx-SAM synthase family. As to quaternary structure, homodimer.

The catalysed reaction is prephenate + S-adenosyl-L-methionine = carboxy-S-adenosyl-L-methionine + 3-phenylpyruvate + H2O. Functionally, catalyzes the conversion of S-adenosyl-L-methionine (SAM) to carboxy-S-adenosyl-L-methionine (Cx-SAM). The polypeptide is Carboxy-S-adenosyl-L-methionine synthase (Pseudoalteromonas atlantica (strain T6c / ATCC BAA-1087)).